The sequence spans 255 residues: 4-hydroxy-tetrahydrodipicolinate reductase (255 aa).

NAD(+) is bound by residues 13–18 (GCNGKM), 90–92 (CTT), and 114–117 (SANM). The Proton donor/acceptor role is filled by H147. H148 contacts (S)-2,3,4,5-tetrahydrodipicolinate. K151 serves as the catalytic Proton donor. (S)-2,3,4,5-tetrahydrodipicolinate is bound at residue 157–158 (GT).

Belongs to the DapB family.

The protein resides in the cytoplasm. The catalysed reaction is (S)-2,3,4,5-tetrahydrodipicolinate + NAD(+) + H2O = (2S,4S)-4-hydroxy-2,3,4,5-tetrahydrodipicolinate + NADH + H(+). It carries out the reaction (S)-2,3,4,5-tetrahydrodipicolinate + NADP(+) + H2O = (2S,4S)-4-hydroxy-2,3,4,5-tetrahydrodipicolinate + NADPH + H(+). The protein operates within amino-acid biosynthesis; L-lysine biosynthesis via DAP pathway; (S)-tetrahydrodipicolinate from L-aspartate: step 4/4. Catalyzes the conversion of 4-hydroxy-tetrahydrodipicolinate (HTPA) to tetrahydrodipicolinate. The polypeptide is 4-hydroxy-tetrahydrodipicolinate reductase (Clostridium tetani (strain Massachusetts / E88)).